The primary structure comprises 137 residues: Large ribosomal subunit protein uL16 (137 aa).

This sequence belongs to the universal ribosomal protein uL16 family. Part of the 50S ribosomal subunit.

Its function is as follows. Binds 23S rRNA and is also seen to make contacts with the A and possibly P site tRNAs. In Rhodopseudomonas palustris (strain BisB18), this protein is Large ribosomal subunit protein uL16.